A 70-amino-acid chain; its full sequence is Large ribosomal subunit protein bL31 (70 aa).

Positions 16, 18, 38, and 41 each coordinate Zn(2+).

Belongs to the bacterial ribosomal protein bL31 family. Type A subfamily. Part of the 50S ribosomal subunit. It depends on Zn(2+) as a cofactor.

In terms of biological role, binds the 23S rRNA. The chain is Large ribosomal subunit protein bL31 from Bifidobacterium adolescentis (strain ATCC 15703 / DSM 20083 / NCTC 11814 / E194a).